Reading from the N-terminus, the 594-residue chain is Arginine--tRNA ligase (594 aa).

A 'HIGH' region motif is present at residues Ala139–His149.

It belongs to the class-I aminoacyl-tRNA synthetase family. Monomer.

Its subcellular location is the cytoplasm. The enzyme catalyses tRNA(Arg) + L-arginine + ATP = L-arginyl-tRNA(Arg) + AMP + diphosphate. The chain is Arginine--tRNA ligase from Burkholderia mallei (strain NCTC 10247).